A 629-amino-acid polypeptide reads, in one-letter code: (-)-alpha pinene synthase 1, chloroplastic (629 aa).

The N-terminal 48 residues, 1–48 (MSPVSVISLPSDLCLPTSFIDRSGRELNPLHITIPNVAMRRQGKLMTR), are a transit peptide targeting the chloroplast. Mg(2+)-binding residues include Asp380, Asp384, and Asp532. The DDXXD motif signature appears at 380–384 (DDMYD).

It belongs to the terpene synthase family. Tpsd subfamily. Requires Mg(2+) as cofactor. Mn(2+) serves as cofactor.

The protein localises to the plastid. Its subcellular location is the chloroplast. It catalyses the reaction (2E)-geranyl diphosphate = (1S,5S)-alpha-pinene + diphosphate. It carries out the reaction (2E)-geranyl diphosphate = (1S,5S)-beta-pinene + diphosphate. The protein operates within terpene metabolism; oleoresin biosynthesis. It participates in secondary metabolite biosynthesis; terpenoid biosynthesis. Monoterpene synthase (TPS) involved in the biosynthesis of monoterpene natural products included in conifer oleoresin secretions and volatile emissions; these compounds contribute to biotic and abiotic stress defense against herbivores and pathogens. Catalyzes the conversion of (2E)-geranyl diphosphate (GPP) to (-)-alpha-pinene and, to a lower extent, to (-)-beta-pinene. This Pinus contorta (Shore pine) protein is (-)-alpha pinene synthase 1, chloroplastic.